Reading from the N-terminus, the 376-residue chain is Palmitoyltransferase PFA4 (376 aa).

Topologically, residues 1-11 (MPVKLKWPWLG) are cytoplasmic. Residues 12–32 (IAIPSFLIASIGYCAHYFILL) form a helical membrane-spanning segment. Topologically, residues 33–40 (NFLSLRKQ) are lumenal. The helical transmembrane segment at 41 to 61 (LWYQFCQTMIWLSYYLAIYTP) threads the bilayer. The Cytoplasmic portion of the chain corresponds to 62 to 122 (PGKPPTNFKP…NCVGYNNFPH (61 aa)). The DHHC domain occupies 78 to 128 (VYCKKCKCYKPERSHHCKTCNQCVLMMDHHCPWTMNCVGYNNFPHFIRFLF). C108 serves as the catalytic S-palmitoyl cysteine intermediate. A helical membrane pass occupies residues 123-143 (FIRFLFWVIVGTTSLAIFLTT). Residues 144–163 (RIHSIWVHRSSPSYLYYKSE) are Lumenal-facing. The helical transmembrane segment at 164-184 (LIFLTILTPLNAFILLTISIL) threads the bilayer. Over 185–376 (MIRCLFNQIF…EDFGVDVDVE (192 aa)) the chain is Cytoplasmic.

The protein belongs to the DHHC palmitoyltransferase family. PFA4 subfamily.

The protein localises to the endoplasmic reticulum membrane. The enzyme catalyses L-cysteinyl-[protein] + hexadecanoyl-CoA = S-hexadecanoyl-L-cysteinyl-[protein] + CoA. Its function is as follows. Mediates the reversible addition of palmitate to target proteins, thereby regulating their membrane association and biological function. In Candida glabrata (strain ATCC 2001 / BCRC 20586 / JCM 3761 / NBRC 0622 / NRRL Y-65 / CBS 138) (Yeast), this protein is Palmitoyltransferase PFA4.